A 157-amino-acid polypeptide reads, in one-letter code: Protein Smg homolog (157 aa).

It belongs to the Smg family.

The polypeptide is Protein Smg homolog (Aliivibrio fischeri (strain ATCC 700601 / ES114) (Vibrio fischeri)).